Reading from the N-terminus, the 65-residue chain is uncharacterized protein (65 aa).

It localises to the plastid. The protein resides in the chloroplast. This is an uncharacterized protein from Guillardia theta (Cryptophyte).